The chain runs to 146 residues: Small ribosomal subunit protein uS5 (146 aa).

An S5 DRBM domain is found at 8–71; the sequence is FEEVIVNIGR…DDAFKNIIDV (64 aa).

This sequence belongs to the universal ribosomal protein uS5 family. In terms of assembly, part of the 30S ribosomal subunit. Contacts proteins S4 and S8.

With S4 and S12 plays an important role in translational accuracy. In terms of biological role, located at the back of the 30S subunit body where it stabilizes the conformation of the head with respect to the body. The sequence is that of Small ribosomal subunit protein uS5 from Campylobacter hominis (strain ATCC BAA-381 / DSM 21671 / CCUG 45161 / LMG 19568 / NCTC 13146 / CH001A).